The chain runs to 520 residues: Sensory neuron membrane protein 1 (520 aa).

Residues methionine 1 to lysine 5 lie on the Cytoplasmic side of the membrane. A helical transmembrane segment spans residues leucine 6–proline 26. At proline 27 to serine 451 the chain is on the extracellular side. Asparagine 64, asparagine 224, and asparagine 268 each carry an N-linked (GlcNAc...) asparagine glycan. Cystine bridges form between cysteine 264–cysteine 329, cysteine 293–cysteine 348, and cysteine 331–cysteine 337. Residues isoleucine 452–alanine 472 form a helical membrane-spanning segment. Over alanine 473–aspartate 520 the chain is Cytoplasmic.

Belongs to the CD36 family.

It localises to the cell membrane. In terms of biological role, plays an olfactory role that is not restricted to pheromone sensitivity. In Apis mellifera (Honeybee), this protein is Sensory neuron membrane protein 1.